The primary structure comprises 616 residues: Sulfite reductase [NADPH] flavoprotein alpha-component (616 aa).

One can recognise a Flavodoxin-like domain in the interval 80 to 218 (LTIIFASQTG…SAAQWRKQAL (139 aa)). FMN contacts are provided by residues 86-91 (SQTGNA), 133-136 (STNG), and 169-178 (LGDSSYEFFC). Positions 251-465 (QKPYAATLLT…VENNNNFKLP (215 aa)) constitute an FAD-binding FR-type domain. FAD is bound by residues T339, G373, 403–406 (RLYS), 421–423 (TVG), Y427, and 436–439 (GGAS). NADP(+) is bound by residues 536-537 (SR), 542-546 (KVYVQ), and D578. Y616 provides a ligand contact to FAD.

This sequence belongs to the NADPH-dependent sulphite reductase flavoprotein subunit CysJ family. In the N-terminal section; belongs to the flavodoxin family. The protein in the C-terminal section; belongs to the flavoprotein pyridine nucleotide cytochrome reductase family. In terms of assembly, alpha(8)-beta(8). The alpha component is a flavoprotein, the beta component is a hemoprotein. Requires FAD as cofactor. The cofactor is FMN.

It catalyses the reaction hydrogen sulfide + 3 NADP(+) + 3 H2O = sulfite + 3 NADPH + 4 H(+). It functions in the pathway sulfur metabolism; hydrogen sulfide biosynthesis; hydrogen sulfide from sulfite (NADPH route): step 1/1. Its function is as follows. Component of the sulfite reductase complex that catalyzes the 6-electron reduction of sulfite to sulfide. This is one of several activities required for the biosynthesis of L-cysteine from sulfate. The flavoprotein component catalyzes the electron flow from NADPH -&gt; FAD -&gt; FMN to the hemoprotein component. This is Sulfite reductase [NADPH] flavoprotein alpha-component from Vibrio vulnificus (strain CMCP6).